A 505-amino-acid polypeptide reads, in one-letter code: Putative thymidine phosphorylase (505 aa).

This sequence belongs to the thymidine/pyrimidine-nucleoside phosphorylase family. Type 2 subfamily.

It catalyses the reaction thymidine + phosphate = 2-deoxy-alpha-D-ribose 1-phosphate + thymine. The sequence is that of Putative thymidine phosphorylase from Parvibaculum lavamentivorans (strain DS-1 / DSM 13023 / NCIMB 13966).